The sequence spans 517 residues: Methionine aminopeptidase 1b (517 aa).

Residues 74–94 (YCNKENSNNNNNNNNNNNNNL) are disordered. A compositionally biased stretch (low complexity) spans 79 to 94 (NSNNNNNNNNNNNNNL). Residues 114-166 (ENLCSGCKKVLIKKLSCPICLKNKIFSYFCNQECFKGSWKEHQKIHENMNKEN) form a C6H2-type zinc finger. Positions 117, 120, 130, 133, 143, 147, 155, and 159 each coordinate Zn(2+). H325 lines the a protein pocket. D342, D353, and H419 together coordinate Zn(2+). H426 serves as a coordination point for a protein. Zn(2+) contacts are provided by E452 and E483.

This sequence belongs to the peptidase M24A family. Methionine aminopeptidase type 1 subfamily. Associates with the 60S ribosomal subunit of the 80S translational complex. The cofactor is Zn(2+). Co(2+) is required as a cofactor. Requires Mn(2+) as cofactor. It depends on Fe(2+) as a cofactor.

Its subcellular location is the cytoplasm. It carries out the reaction Release of N-terminal amino acids, preferentially methionine, from peptides and arylamides.. Inhibited by pyrimidine derivative XC11. Cotranslationally removes the N-terminal methionine from nascent proteins. The N-terminal methionine is often cleaved when the second residue in the primary sequence is small and uncharged (Met-Ala-, Cys, Gly, Pro, Ser, Thr, or Val). May play an important role in parasite growth during the blood asexual stage. The polypeptide is Methionine aminopeptidase 1b (Plasmodium falciparum (isolate 3D7)).